A 731-amino-acid chain; its full sequence is 1,4-alpha-glucan branching enzyme GlgB (731 aa).

Aspartate 412 (nucleophile) is an active-site residue. The Proton donor role is filled by glutamate 465.

The protein belongs to the glycosyl hydrolase 13 family. GlgB subfamily. Monomer.

The enzyme catalyses Transfers a segment of a (1-&gt;4)-alpha-D-glucan chain to a primary hydroxy group in a similar glucan chain.. It participates in glycan biosynthesis; glycogen biosynthesis. Catalyzes the formation of the alpha-1,6-glucosidic linkages in glycogen by scission of a 1,4-alpha-linked oligosaccharide from growing alpha-1,4-glucan chains and the subsequent attachment of the oligosaccharide to the alpha-1,6 position. This chain is 1,4-alpha-glucan branching enzyme GlgB, found in Bordetella pertussis (strain Tohama I / ATCC BAA-589 / NCTC 13251).